The following is a 213-amino-acid chain: EEF1A lysine methyltransferase 1 (213 aa).

This sequence belongs to the class I-like SAM-binding methyltransferase superfamily. EFM5 family.

It localises to the cytoplasm. It catalyses the reaction L-lysyl-[protein] + 3 S-adenosyl-L-methionine = N(6),N(6),N(6)-trimethyl-L-lysyl-[protein] + 3 S-adenosyl-L-homocysteine + 3 H(+). In terms of biological role, protein-lysine methyltransferase that selectively catalyzes the trimethylation of EEF1A at 'Lys-79'. This Gallus gallus (Chicken) protein is EEF1A lysine methyltransferase 1.